Here is a 232-residue protein sequence, read N- to C-terminus: Methylthioribulose-1-phosphate dehydratase (232 aa).

C91 provides a ligand contact to substrate. Residues H109, H111, and H191 each contribute to the Zn(2+) site.

Belongs to the aldolase class II family. MtnB subfamily. Zn(2+) serves as cofactor.

It is found in the cytoplasm. It carries out the reaction 5-(methylsulfanyl)-D-ribulose 1-phosphate = 5-methylsulfanyl-2,3-dioxopentyl phosphate + H2O. It participates in amino-acid biosynthesis; L-methionine biosynthesis via salvage pathway; L-methionine from S-methyl-5-thio-alpha-D-ribose 1-phosphate: step 2/6. Catalyzes the dehydration of methylthioribulose-1-phosphate (MTRu-1-P) into 2,3-diketo-5-methylthiopentyl-1-phosphate (DK-MTP-1-P). The chain is Methylthioribulose-1-phosphate dehydratase from Schizosaccharomyces japonicus (strain yFS275 / FY16936) (Fission yeast).